Consider the following 203-residue polypeptide: Pyrrolidone-carboxylate peptidase (203 aa).

Residues Glu-78, Cys-141, and His-165 contribute to the active site.

This sequence belongs to the peptidase C15 family. Homotetramer.

The protein resides in the cytoplasm. The enzyme catalyses Release of an N-terminal pyroglutamyl group from a polypeptide, the second amino acid generally not being Pro.. Removes 5-oxoproline from various penultimate amino acid residues except L-proline. This chain is Pyrrolidone-carboxylate peptidase, found in Thermoanaerobacter pseudethanolicus (strain ATCC 33223 / 39E) (Clostridium thermohydrosulfuricum).